Consider the following 623-residue polypeptide: uncharacterized protein (623 aa).

The stretch at 24-51 forms a coiled coil; that stretch reads RALVQKDELAQASQDVEDMRDCYDSLLN. 5 disordered regions span residues 148–170, 240–343, 362–393, 454–531, and 585–607; these read TRQREKGRSKGGKGETFSPQQLQ, FSGL…TTPP, ALPTPVETTRSPSSTTSPGHKNVGSSNPTKAI, SFSG…LGYS, and KKLGTPSPPLTPMSLIHPPPQAL. Acidic residues predominate over residues 243–259; it reads LEDDDGDDEIENNENDG. Residues 328–343 show a composition bias toward polar residues; sequence VSQSAPLFPENRTTPP. The span at 364 to 379 shows a compositional bias: low complexity; the sequence is PTPVETTRSPSSTTSP. Over residues 384–393 the composition is skewed to polar residues; it reads VGSSNPTKAI. The span at 484-495 shows a compositional bias: low complexity; it reads PVSKLPKVSSSP. Over residues 496 to 506 the composition is skewed to polar residues; the sequence is TASPTFVSTPK. Positions 590–606 are enriched in pro residues; sequence PSPPLTPMSLIHPPPQA.

This is an uncharacterized protein from Arabidopsis thaliana (Mouse-ear cress).